A 545-amino-acid chain; its full sequence is MSSASPLARCCDEATPSAGPRAAQPPYHGPVTSMVAHDAAAGVTGEGAGPPVRRAPARTYQVRTYGCQMNVHDSERLAGLLEAAGYRRATDGSEADVVVFNTCAVRENADNRLYGNLSHLAPRKRANPDMQIAVGGCLAQKDRDAVLRRAPWVDVVFGTHNIGSLPTLLERARHNKVAQVEIAEALQQFPSSLPSSRESAYAAWVSISVGCNNSCTFCIVPSLRGREVDRSPADILAEVRSLVNDGVLEVTLLGQNVNAYGVSFADPALPRNRGAFAELLRACGDIDGLERVRFTSPHPAEFTDDVIEAMAQTRNVCPALHMPLQSGSDRILRAMRRSYRAERYLGIIERVRAAIPHAAITTDLIVGFPGETEEDFAATLDVVRRARFAAAFTFQYSKRPGTPAAQLDGQLPKAVVQERYERLIALQEQISLEANRALVGQAVEVLVATGEGRKDTVTARMSGRARDGRLVHFTAGQPRVRPGDVITTKVTEAAPHHLIADAGVLTHRRTRAGDAHTAGQPGRAVGLGMPGVGLPVSAAKPGGCR.

The interval M1 to T32 is disordered. The 117-residue stretch at R58 to H174 folds into the MTTase N-terminal domain. Residues C67, C103, C137, C211, C215, and C218 each contribute to the [4Fe-4S] cluster site. Residues R197–E433 enclose the Radical SAM core domain. The TRAM domain maps to R436 to V504.

This sequence belongs to the methylthiotransferase family. MiaB subfamily. In terms of assembly, monomer. The cofactor is [4Fe-4S] cluster.

The protein resides in the cytoplasm. The catalysed reaction is N(6)-dimethylallyladenosine(37) in tRNA + (sulfur carrier)-SH + AH2 + 2 S-adenosyl-L-methionine = 2-methylsulfanyl-N(6)-dimethylallyladenosine(37) in tRNA + (sulfur carrier)-H + 5'-deoxyadenosine + L-methionine + A + S-adenosyl-L-homocysteine + 2 H(+). Functionally, catalyzes the methylthiolation of N6-(dimethylallyl)adenosine (i(6)A), leading to the formation of 2-methylthio-N6-(dimethylallyl)adenosine (ms(2)i(6)A) at position 37 in tRNAs that read codons beginning with uridine. This is tRNA-2-methylthio-N(6)-dimethylallyladenosine synthase from Mycobacterium bovis (strain BCG / Pasteur 1173P2).